A 208-amino-acid polypeptide reads, in one-letter code: uncharacterized protein (208 aa).

Disordered regions lie at residues 74–117 and 181–208; these read FEYK…RDSP and ESKL…RKFK. Residues 184–208 show a composition bias toward polar residues; that stretch reads LGSSEDSGTDRFSSNTSGSSGRKFK.

This is an uncharacterized protein from Mus musculus (Mouse).